Reading from the N-terminus, the 366-residue chain is Lysophosphatidic acid receptor 1-B (366 aa).

Over 1–52 (MTSLSEFVSEPIGMMSQTSAASESQCYYNETIAFFYNRSGKYLDTEWNAVSK) the chain is Extracellular. Disulfide bonds link Cys26-Cys192 and Cys190-Cys197. Residues Asn29 and Asn37 are each glycosylated (N-linked (GlcNAc...) asparagine). Lys41 provides a ligand contact to a 1-acyl-sn-glycero-3-phosphate. The helical transmembrane segment at 53–77 (LVMGLGITVCIFIMLANLLVMVAIY) threads the bilayer. Over 78–85 (VNRRFHFP) the chain is Cytoplasmic. The helical transmembrane segment at 86–109 (IYYLMANLAAADFFAGLAYFYLMF) threads the bilayer. Residues 110-123 (NTGPNTRRLTVSTW) are Extracellular-facing. A helical transmembrane segment spans residues 124–146 (LLRQGLIDTSLTASVANLLAIAI). Position 126-131 (126-131 (RQGLID)) interacts with a 1-acyl-sn-glycero-3-phosphate. Residues 147–165 (ERHITVFRMQLHTRMSNRR) are Cytoplasmic-facing. A helical transmembrane segment spans residues 166 to 186 (VVVVIVVIWTVAIVMGAIPSV). Residues 187–206 (GWNCICDLEHCSNMAPLYSD) lie on the Extracellular side of the membrane. A helical membrane pass occupies residues 207–227 (SYLIFWTIFNLVTFVVMVVLY). An a 1-acyl-sn-glycero-3-phosphate-binding site is contributed by Trp212. Residues 228-257 (AHIFVYVRQRTMRMSRHSSGPRRNRDTMMS) lie on the Cytoplasmic side of the membrane. The chain crosses the membrane as a helical span at residues 258–282 (LLKTVVIVLGAFIVCWTPGLVLLLL). Residues 283 to 296 (DVCCPQCNILAYEK) are Extracellular-facing. Cysteines 286 and 289 form a disulfide. The chain crosses the membrane as a helical span at residues 297–317 (FFLLLAEFNSAMNPIIYSYRD). The Cytoplasmic segment spans residues 318 to 366 (KEMSATFKQILCCQRTENVNGPTEGSDRSASSLNHTILAGVHSNDHSVV).

It belongs to the G-protein coupled receptor 1 family. Expressed at high levels in oocytes and at lower levels in brain and spinal cord. Below detection level in lung, heart, kidney, liver, muscle, stomach, and intestine.

The protein resides in the cell surface. The protein localises to the cell membrane. It localises to the endosome. In terms of biological role, receptor for lysophosphatidic acid (LPA). Plays a role in the reorganization of the actin cytoskeleton, cell migration, differentiation and proliferation, and thereby contributes to the responses to tissue damage and infectious agents. Activates downstream signaling cascades via the G(i)/G(o), G(12)/G(13), and G(q) families of heteromeric G proteins. Signaling inhibits adenylyl cyclase activity and decreases cellular cAMP levels. Signaling triggers an increase of cytoplasmic Ca(2+) levels. Signaling leads to the activation of phospholipase C (PLC) and the formation of inositol 1,4,5-trisphosphate. Signaling mediates activation of down-stream MAP kinases. Contributes to the regulation of cell shape. Promotes Rho-dependent reorganization of the actin cytoskeleton in neuronal cells and neurite retraction. Promotes the activation of Rho and the formation of actin stress fibers. Promotes formation of lamellipodia at the leading edge of migrating cells via activation of Rac. Through its function as lysophosphatidic acid receptor, plays a role in chemotaxis and cell migration, including responses to injury and wounding. Promotes cell proliferation in response to lysophosphatidic acid. The protein is Lysophosphatidic acid receptor 1-B (lpar1-b) of Xenopus laevis (African clawed frog).